We begin with the raw amino-acid sequence, 396 residues long: Probable circularly permuted 1,3-beta-glucanase YJL171C (396 aa).

A signal peptide spans 1–19; sequence MLQSIVLSVCMFMLHTVAA. Asparagine 51, asparagine 99, asparagine 122, asparagine 146, asparagine 174, asparagine 219, and asparagine 249 each carry an N-linked (GlcNAc...) asparagine glycan. Residues 259 to 264 carry the ExDxxE motif motif; the sequence is EYDIFE. 4 N-linked (GlcNAc...) asparagine glycosylation sites follow: asparagine 267, asparagine 300, asparagine 328, and asparagine 346. Asparagine 368 carries the GPI-anchor amidated asparagine lipid modification. A propeptide spans 369–396 (removed in mature form); that stretch reads GVALTKMQNGVWYYILAIFTAFTQVVLI.

It belongs to the PGA52 family. Extensively N-glycosylated.

The protein resides in the cell membrane. It carries out the reaction Hydrolysis of (1-&gt;3)-beta-D-glucosidic linkages in (1-&gt;3)-beta-D-glucans.. Probable circularly permuted 1,3-beta-glucanase involved in cell wall modification through beta-1,3-glucan network alterations such as increased branching or remodeling. This is Probable circularly permuted 1,3-beta-glucanase YJL171C (TOH1) from Saccharomyces cerevisiae (strain ATCC 204508 / S288c) (Baker's yeast).